The following is a 294-amino-acid chain: 4-diphosphocytidyl-2-C-methyl-D-erythritol kinase (294 aa).

K16 is a catalytic residue. 99-109 (PMGAGLGGGSS) serves as a coordination point for ATP. Residue D141 is part of the active site.

Belongs to the GHMP kinase family. IspE subfamily.

It catalyses the reaction 4-CDP-2-C-methyl-D-erythritol + ATP = 4-CDP-2-C-methyl-D-erythritol 2-phosphate + ADP + H(+). It participates in isoprenoid biosynthesis; isopentenyl diphosphate biosynthesis via DXP pathway; isopentenyl diphosphate from 1-deoxy-D-xylulose 5-phosphate: step 3/6. Functionally, catalyzes the phosphorylation of the position 2 hydroxy group of 4-diphosphocytidyl-2C-methyl-D-erythritol. The chain is 4-diphosphocytidyl-2-C-methyl-D-erythritol kinase from Polynucleobacter asymbioticus (strain DSM 18221 / CIP 109841 / QLW-P1DMWA-1) (Polynucleobacter necessarius subsp. asymbioticus).